Here is a 166-residue protein sequence, read N- to C-terminus: 6,7-dimethyl-8-ribityllumazine synthase (166 aa).

5-amino-6-(D-ribitylamino)uracil-binding positions include Phe24, 58–60 (ALE), and 82–84 (AVV). 87–88 (ET) is a binding site for (2S)-2-hydroxy-3-oxobutyl phosphate. The active-site Proton donor is the His90. 5-amino-6-(D-ribitylamino)uracil is bound at residue Asn115. Arg129 provides a ligand contact to (2S)-2-hydroxy-3-oxobutyl phosphate.

The protein belongs to the DMRL synthase family.

The catalysed reaction is (2S)-2-hydroxy-3-oxobutyl phosphate + 5-amino-6-(D-ribitylamino)uracil = 6,7-dimethyl-8-(1-D-ribityl)lumazine + phosphate + 2 H2O + H(+). It participates in cofactor biosynthesis; riboflavin biosynthesis; riboflavin from 2-hydroxy-3-oxobutyl phosphate and 5-amino-6-(D-ribitylamino)uracil: step 1/2. Functionally, catalyzes the formation of 6,7-dimethyl-8-ribityllumazine by condensation of 5-amino-6-(D-ribitylamino)uracil with 3,4-dihydroxy-2-butanone 4-phosphate. This is the penultimate step in the biosynthesis of riboflavin. The sequence is that of 6,7-dimethyl-8-ribityllumazine synthase from Cupriavidus necator (strain ATCC 17699 / DSM 428 / KCTC 22496 / NCIMB 10442 / H16 / Stanier 337) (Ralstonia eutropha).